A 554-amino-acid polypeptide reads, in one-letter code: MSPPIQLLSPEIVNLIAAGEVIDSLAAVVRELVENAIDAEATRLTISIVPELWQVTVADNGRGMSLENLRHCAKAHHTSKICDLDDLWKITSLGFRGEALFSITQVGQLTIKSRDATGYQVGWCVDYNQQGEIIKEQTSPMASGTIVTASNLFGTIPVRRQGLPTIKQQLKAIQGMIDNMSLCHPQITWQVYHNHQSWLTISPGKTPQQILPQLLKSVHFHDLQFLCETIITPSQEQAKLEMVLGLPDRTSRGRLDWLKIAVNGRVVRSPRLEQTILAGLSRTLPKGRFPVSFLHFKIPPSEIDWNRHPAKTEIYLQSLEFWQEKVTEIIEKALKLSPLTITTVGQNQRVKKLLKASENKGVYNVGTSHVNELDLIKLRAVGQVNKTYIVAEHSQGLWLVEQHIAHERVLYEQLQDQWQLIPVEQAIILTQLSTKQVEQLERIGIDIEPFGENTWAVRNVPKLLENREDCPDALIELSLGGDLETAQVAVACRSAIRNGVLLDLAQMQDLLDSWKKTRNPRTCPHGRPIYLSLEESSLSRFFRRHWVIGKSHGI.

Belongs to the DNA mismatch repair MutL/HexB family.

Functionally, this protein is involved in the repair of mismatches in DNA. It is required for dam-dependent methyl-directed DNA mismatch repair. May act as a 'molecular matchmaker', a protein that promotes the formation of a stable complex between two or more DNA-binding proteins in an ATP-dependent manner without itself being part of a final effector complex. This Crocosphaera subtropica (strain ATCC 51142 / BH68) (Cyanothece sp. (strain ATCC 51142)) protein is DNA mismatch repair protein MutL.